Consider the following 144-residue polypeptide: Aspartate carbamoyltransferase regulatory chain (144 aa).

The Zn(2+) site is built by Cys103, Cys108, Cys132, and Cys135.

It belongs to the PyrI family. Contains catalytic and regulatory chains. It depends on Zn(2+) as a cofactor.

Functionally, involved in allosteric regulation of aspartate carbamoyltransferase. This chain is Aspartate carbamoyltransferase regulatory chain, found in Clostridium tetani (strain Massachusetts / E88).